Consider the following 174-residue polypeptide: 5-hydroxymethyl-dUMP N-hydrolase (174 aa).

Alanine 2 bears the N-acetylalanine mark. Glycine 27 lines the 5-hydroxymethyl-dUMP pocket. Serine 28 is modified (phosphoserine). Isoleucine 29, arginine 30, glycine 31, serine 98, glycine 100, and glutamate 104 together coordinate 5-hydroxymethyl-dUMP. Serine 98 carries the post-translational modification Phosphoserine. Serine 123, serine 128, serine 138, and serine 169 each carry phosphoserine. Serine 128 lines the 5-hydroxymethyl-dUMP pocket.

The protein belongs to the 2'-deoxynucleoside 5'-phosphate N-hydrolase 1 family. In terms of assembly, monomer and homodimer. In terms of tissue distribution, expressed at low levels in brain, colon, lung, peripheral blood leukocytes, placenta, small intestine, and thymus. Expressed at high levels in heart, kidney, liver, skeletal muscle and spleen. Overexpressed in a significant proportion of breast cancers.

The protein localises to the cytoplasm. It localises to the nucleus. The catalysed reaction is 5-hydroxymethyl-dUMP + H2O = 5-hydroxymethyluracil + 2-deoxy-D-ribose 5-phosphate. With respect to regulation, inhibited by AMP and GMP. Functionally, part of a nucleotide salvage pathway that eliminates epigenetically modified 5-hydroxymethyl-dCMP (hmdCMP) in a two-step process entailing deamination to cytotoxic 5-hydroxymethyl-dUMP (hmdUMP), followed by its hydrolysis into 5-hydroxymethyluracil (hmU) and 2-deoxy-D-ribose 5-phosphate (deoxyribosephosphate). Catalyzes the second step in that pathway, the hydrolysis of the N-glycosidic bond in hmdUMP, degrading this cytotoxic nucleotide to avoid its genomic integration. The polypeptide is 5-hydroxymethyl-dUMP N-hydrolase (Homo sapiens (Human)).